The following is a 94-amino-acid chain: Small ribosomal subunit protein uS19 (94 aa).

This sequence belongs to the universal ribosomal protein uS19 family.

In terms of biological role, protein S19 forms a complex with S13 that binds strongly to the 16S ribosomal RNA. This chain is Small ribosomal subunit protein uS19, found in Clostridium novyi (strain NT).